The following is a 570-amino-acid chain: Peptidyl-prolyl cis-trans isomerase FKBP9 (570 aa).

An N-terminal signal peptide occupies residues 1–24 (MALGARGWRRRSLLLLLLWVTGQA). PPIase FKBP-type domains are found at residues 54–142 (GDFV…VDIW), 166–254 (SDFV…LDLH), 278–365 (GDFL…IDFH), and 389–477 (GDYL…LELV). 4 N-linked (GlcNAc...) asparagine glycosylation sites follow: asparagine 174, asparagine 286, asparagine 302, and asparagine 397. EF-hand domains follow at residues 488 to 523 (WNGE…QVAT) and 533 to 568 (NAEM…AKHD). Ca(2+)-binding residues include aspartate 501, aspartate 503, asparagine 505, glutamate 507, glutamate 512, aspartate 546, asparagine 548, aspartate 550, lysine 552, and glutamate 557. Positions 567 to 570 (HDEL) match the Prevents secretion from ER motif.

Post-translationally, phosphorylated. In terms of tissue distribution, predominantly expressed in heart, skeletal muscle, lung, liver and kidney. Lower levels found in brain, spleen and testis.

The protein localises to the endoplasmic reticulum lumen. It catalyses the reaction [protein]-peptidylproline (omega=180) = [protein]-peptidylproline (omega=0). Inhibited by FK506. PPIases accelerate the folding of proteins during protein synthesis. This chain is Peptidyl-prolyl cis-trans isomerase FKBP9 (Fkbp9), found in Mus musculus (Mouse).